The chain runs to 178 residues: Outer envelope pore protein 16-2, chloroplastic (178 aa).

The contains beta strands stretch occupies residues 1–102; sequence MEKSGGRIVM…DALVKNTGKE (102 aa). Residues 103–119 form a helical membrane-spanning segment; sequence SLQWGLAAGLYSGITYG.

This sequence belongs to the Tim17/Tim22/Tim23 family. Plastid outer envelope porin OEP16 (TC 1.B.30) subfamily. As to quaternary structure, homodimer and oligomers in membrane. Detected in pollen and seeds. Present in leaves and cotyledons.

Its subcellular location is the plastid. It is found in the chloroplast outer membrane. In terms of biological role, voltage-dependent high-conductance channel with a slight cation-selectivity; selective for amino acids but excludes triosephosphates or uncharged sugars. Non-essential amino acid-selective channel protein and translocation pore for NADPH:protochlorophyllide oxidoreductase A (PORA) and possibly PORB. In Arabidopsis thaliana (Mouse-ear cress), this protein is Outer envelope pore protein 16-2, chloroplastic (OEP162).